Consider the following 492-residue polypeptide: Cysteine--tRNA ligase (492 aa).

Position 27 (Cys-27) interacts with Zn(2+). Residues 29-39 (VTVYDLCHLGH) carry the 'HIGH' region motif. Zn(2+) is bound by residues Cys-211, His-236, and Glu-240. Positions 268-272 (KMSKS) match the 'KMSKS' region motif. Residue Lys-271 coordinates ATP.

It belongs to the class-I aminoacyl-tRNA synthetase family. As to quaternary structure, monomer. The cofactor is Zn(2+).

It localises to the cytoplasm. The enzyme catalyses tRNA(Cys) + L-cysteine + ATP = L-cysteinyl-tRNA(Cys) + AMP + diphosphate. The sequence is that of Cysteine--tRNA ligase from Prochlorococcus marinus subsp. pastoris (strain CCMP1986 / NIES-2087 / MED4).